Consider the following 390-residue polypeptide: Galactokinase (390 aa).

33 to 36 (EHTD) contributes to the substrate binding site. ATP contacts are provided by residues Ser-67 and 124–130 (GSGLSSS). Residues Ser-130 and Glu-162 each coordinate Mg(2+). Catalysis depends on Asp-174, which acts as the Proton acceptor. Tyr-224 provides a ligand contact to substrate.

This sequence belongs to the GHMP kinase family. GalK subfamily.

The protein localises to the cytoplasm. The catalysed reaction is alpha-D-galactose + ATP = alpha-D-galactose 1-phosphate + ADP + H(+). The protein operates within carbohydrate metabolism; galactose metabolism. Catalyzes the transfer of the gamma-phosphate of ATP to D-galactose to form alpha-D-galactose-1-phosphate (Gal-1-P). The sequence is that of Galactokinase from Streptococcus mutans serotype c (strain ATCC 700610 / UA159).